Here is a 337-residue protein sequence, read N- to C-terminus: Phosphoenolpyruvate transferase (337 aa).

Position 69 (aspartate 69) interacts with 7,8-didemethyl-8-hydroxy-5-deazariboflavin.

It belongs to the CofD family. In terms of assembly, homodimer. Mg(2+) is required as a cofactor.

The catalysed reaction is enolpyruvoyl-2-diphospho-5'-guanosine + 7,8-didemethyl-8-hydroxy-5-deazariboflavin = dehydro coenzyme F420-0 + GMP + H(+). It functions in the pathway cofactor biosynthesis; coenzyme F420 biosynthesis. Catalyzes the transfer of the phosphoenolpyruvate moiety from enoylpyruvoyl-2-diphospho-5'-guanosine (EPPG) to 7,8-didemethyl-8-hydroxy-5-deazariboflavin (FO) with the formation of dehydro coenzyme F420-0 and GMP. The protein is Phosphoenolpyruvate transferase of Mycobacterium avium (strain 104).